A 391-amino-acid chain; its full sequence is MANWRKYIPEGTKDILFQECKKKVQVENILREIYINSGFLEVKSPTLEFYDVFNIENSTLPQEKIYKLIDGQGRILALRADMTTPIARIVGTKLRDAVYPLRLCYTSNVYRVNESLNGKNSEITQSGVEVIGIKDINADAEVIIMGIKSLLNCGLENFKIEIGHAEMFKALVEDANLDYEEKEKLRESIDTKNFTALNEILHENKGKFEKSSLNVLKELPKLFGGIEIIEKASCLTCNKRAIKALEDVRKVYEIVESIGLGEYLSVDLGMVYHIDYYTGIIFRGYTQGFGGNILSGGRYDNLIAQFGENKPATGFAIDVDGIIKSLETNGNFSDKNDEKVLVYYNKQNFKEAYERAQSLREKGIVAEITHFDEEKEAREYAHSKNMKFLKI.

The protein belongs to the class-II aminoacyl-tRNA synthetase family. HisZ subfamily. Heteromultimer composed of HisG and HisZ subunits.

The protein resides in the cytoplasm. Its pathway is amino-acid biosynthesis; L-histidine biosynthesis; L-histidine from 5-phospho-alpha-D-ribose 1-diphosphate: step 1/9. In terms of biological role, required for the first step of histidine biosynthesis. May allow the feedback regulation of ATP phosphoribosyltransferase activity by histidine. In Clostridium kluyveri (strain ATCC 8527 / DSM 555 / NBRC 12016 / NCIMB 10680 / K1), this protein is ATP phosphoribosyltransferase regulatory subunit.